Consider the following 909-residue polypeptide: Protein translocase subunit SecA (909 aa).

ATP is bound by residues Gln87, 105–109 (GEGKT), and Asp507. The tract at residues 834–909 (EAVEEQRRRQ…KYKQCCGKLS (76 aa)) is disordered. Residues 837–848 (EEQRRRQGDMQY) are compositionally biased toward basic and acidic residues. The segment covering 859 to 871 (QGAGGEGAAGGTA) has biased composition (gly residues). Cys893, Cys895, Cys904, and Cys905 together coordinate Zn(2+).

This sequence belongs to the SecA family. As to quaternary structure, monomer and homodimer. Part of the essential Sec protein translocation apparatus which comprises SecA, SecYEG and auxiliary proteins SecDF-YajC and YidC. The cofactor is Zn(2+).

The protein resides in the cell inner membrane. Its subcellular location is the cytoplasm. It carries out the reaction ATP + H2O + cellular proteinSide 1 = ADP + phosphate + cellular proteinSide 2.. Part of the Sec protein translocase complex. Interacts with the SecYEG preprotein conducting channel. Has a central role in coupling the hydrolysis of ATP to the transfer of proteins into and across the cell membrane, serving both as a receptor for the preprotein-SecB complex and as an ATP-driven molecular motor driving the stepwise translocation of polypeptide chains across the membrane. The protein is Protein translocase subunit SecA of Alkalilimnicola ehrlichii (strain ATCC BAA-1101 / DSM 17681 / MLHE-1).